The primary structure comprises 262 residues: 3-methyl-2-oxobutanoate hydroxymethyltransferase (262 aa).

2 residues coordinate Mg(2+): Asp-44 and Asp-83. 3-methyl-2-oxobutanoate contacts are provided by residues 44–45, Asp-83, and Lys-112; that span reads DS. Glu-114 serves as a coordination point for Mg(2+). Catalysis depends on Glu-181, which acts as the Proton acceptor.

It belongs to the PanB family. Homodecamer; pentamer of dimers. The cofactor is Mg(2+).

Its subcellular location is the cytoplasm. The enzyme catalyses 3-methyl-2-oxobutanoate + (6R)-5,10-methylene-5,6,7,8-tetrahydrofolate + H2O = 2-dehydropantoate + (6S)-5,6,7,8-tetrahydrofolate. It functions in the pathway cofactor biosynthesis; (R)-pantothenate biosynthesis; (R)-pantoate from 3-methyl-2-oxobutanoate: step 1/2. Catalyzes the reversible reaction in which hydroxymethyl group from 5,10-methylenetetrahydrofolate is transferred onto alpha-ketoisovalerate to form ketopantoate. This Thiobacillus denitrificans (strain ATCC 25259 / T1) protein is 3-methyl-2-oxobutanoate hydroxymethyltransferase.